A 244-amino-acid polypeptide reads, in one-letter code: Cyclin-Q (244 aa).

The protein belongs to the cyclin family. Cyclin-like FAM58 subfamily.

In terms of biological role, may be an activating cyclin for the cyclin-associated kinase CDK10. The polypeptide is Cyclin-Q (ccnq) (Xenopus laevis (African clawed frog)).